The following is a 168-amino-acid chain: Protein-export protein SecB (168 aa).

It belongs to the SecB family. Homotetramer, a dimer of dimers. One homotetramer interacts with 1 SecA dimer.

It is found in the cytoplasm. Functionally, one of the proteins required for the normal export of preproteins out of the cell cytoplasm. It is a molecular chaperone that binds to a subset of precursor proteins, maintaining them in a translocation-competent state. It also specifically binds to its receptor SecA. The sequence is that of Protein-export protein SecB from Sinorhizobium medicae (strain WSM419) (Ensifer medicae).